We begin with the raw amino-acid sequence, 235 residues long: Leucyl/phenylalanyl-tRNA--protein transferase (235 aa).

The protein belongs to the L/F-transferase family.

It localises to the cytoplasm. It catalyses the reaction N-terminal L-lysyl-[protein] + L-leucyl-tRNA(Leu) = N-terminal L-leucyl-L-lysyl-[protein] + tRNA(Leu) + H(+). The enzyme catalyses N-terminal L-arginyl-[protein] + L-leucyl-tRNA(Leu) = N-terminal L-leucyl-L-arginyl-[protein] + tRNA(Leu) + H(+). It carries out the reaction L-phenylalanyl-tRNA(Phe) + an N-terminal L-alpha-aminoacyl-[protein] = an N-terminal L-phenylalanyl-L-alpha-aminoacyl-[protein] + tRNA(Phe). Functions in the N-end rule pathway of protein degradation where it conjugates Leu, Phe and, less efficiently, Met from aminoacyl-tRNAs to the N-termini of proteins containing an N-terminal arginine or lysine. The polypeptide is Leucyl/phenylalanyl-tRNA--protein transferase (Magnetococcus marinus (strain ATCC BAA-1437 / JCM 17883 / MC-1)).